Here is a 236-residue protein sequence, read N- to C-terminus: Urease accessory protein UreF (236 aa).

It belongs to the UreF family. UreD, UreF and UreG form a complex that acts as a GTP-hydrolysis-dependent molecular chaperone, activating the urease apoprotein by helping to assemble the nickel containing metallocenter of UreC. The UreE protein probably delivers the nickel.

It localises to the cytoplasm. In terms of biological role, required for maturation of urease via the functional incorporation of the urease nickel metallocenter. This chain is Urease accessory protein UreF, found in Synechocystis sp. (strain ATCC 27184 / PCC 6803 / Kazusa).